The primary structure comprises 268 residues: MIKVKKKFGQNFLQDENIKNQIIQAIPNDVKRIVEIGPGLGDLTQKLVKLDSMIDCFEIDSELYTILLDKFRSELDSGKLNIINSDALNAWDKLSASEYFLVANLPYYVATNMILKAIDDKNCKGLVVMIQREVAIKFSSEAGDKEFSSLAILTWLKGKCELLFDVPSSAFNPPPKVISSVIRIIKDRDLSLNLKYDNFKNFLRVAFSAPRKTLLKNLSNLVQRDRLEIFFNTENLSHTIRPHELSVALYLKLFKEAENERRKQNPCG.

S-adenosyl-L-methionine-binding residues include Asn-11, Leu-13, Gly-37, Glu-58, Asp-86, and Asn-104.

Belongs to the class I-like SAM-binding methyltransferase superfamily. rRNA adenine N(6)-methyltransferase family. RsmA subfamily.

It localises to the cytoplasm. The catalysed reaction is adenosine(1518)/adenosine(1519) in 16S rRNA + 4 S-adenosyl-L-methionine = N(6)-dimethyladenosine(1518)/N(6)-dimethyladenosine(1519) in 16S rRNA + 4 S-adenosyl-L-homocysteine + 4 H(+). Its function is as follows. Specifically dimethylates two adjacent adenosines (A1518 and A1519) in the loop of a conserved hairpin near the 3'-end of 16S rRNA in the 30S particle. May play a critical role in biogenesis of 30S subunits. This is Ribosomal RNA small subunit methyltransferase A from Campylobacter fetus subsp. fetus (strain 82-40).